Here is a 450-residue protein sequence, read N- to C-terminus: UDP-N-acetylmuramoylalanine--D-glutamate ligase (450 aa).

Residue G115–T121 participates in ATP binding.

Belongs to the MurCDEF family.

The protein localises to the cytoplasm. It catalyses the reaction UDP-N-acetyl-alpha-D-muramoyl-L-alanine + D-glutamate + ATP = UDP-N-acetyl-alpha-D-muramoyl-L-alanyl-D-glutamate + ADP + phosphate + H(+). The protein operates within cell wall biogenesis; peptidoglycan biosynthesis. Its function is as follows. Cell wall formation. Catalyzes the addition of glutamate to the nucleotide precursor UDP-N-acetylmuramoyl-L-alanine (UMA). The protein is UDP-N-acetylmuramoylalanine--D-glutamate ligase of Desulfatibacillum aliphaticivorans.